The primary structure comprises 292 residues: Glutamate racemase (292 aa).

Residues 10-11 (DS) and 42-43 (YG) contribute to the substrate site. Cys-73 (proton donor/acceptor) is an active-site residue. 74–75 (NS) lines the substrate pocket. Cys-186 (proton donor/acceptor) is an active-site residue. Residue 187-188 (TH) coordinates substrate.

The protein belongs to the aspartate/glutamate racemases family.

The enzyme catalyses L-glutamate = D-glutamate. The protein operates within cell wall biogenesis; peptidoglycan biosynthesis. Its function is as follows. Provides the (R)-glutamate required for cell wall biosynthesis. In Beutenbergia cavernae (strain ATCC BAA-8 / DSM 12333 / CCUG 43141 / JCM 11478 / NBRC 16432 / NCIMB 13614 / HKI 0122), this protein is Glutamate racemase.